Here is a 357-residue protein sequence, read N- to C-terminus: DnaJ homolog subfamily C member 25 (357 aa).

Residues 19-39 form a helical membrane-spanning segment; the sequence is WLLLAPLLLVPLLARPAEALV. The J domain maps to 48 to 121; the sequence is DCYEVLGVSR…ETRKDYDYML (74 aa). Helical transmembrane passes span 147-167 and 241-261; these read VVIL…WWNS and LLLF…AWYC.

Belongs to the DNAJC25 family.

The protein resides in the membrane. This Mus musculus (Mouse) protein is DnaJ homolog subfamily C member 25 (Dnajc25).